Consider the following 228-residue polypeptide: Ephrin-A5 (228 aa).

A signal peptide spans 1-20; it reads MLHVEMLTLLFLVLWMCVFS. The 134-residue stretch at 29–162 folds into the Ephrin RBD domain; sequence ADRYAVYWNS…KLKVFVRPTN (134 aa). Asn37 carries N-linked (GlcNAc...) asparagine glycosylation. 2 cysteine pairs are disulfide-bonded: Cys62-Cys102 and Cys90-Cys151. The disordered stretch occupies residues 186–205; sequence EPADDTVHESAEPSRGENAA. Basic and acidic residues predominate over residues 190 to 200; sequence DTVHESAEPSR. Asn203 carries GPI-anchor amidated asparagine lipidation. The propeptide at 204 to 228 is removed in mature form; sequence AAQTPRIPSRLLAILLFLLAMLLTL.

The protein belongs to the ephrin family. Binds to the receptor tyrosine kinases EPHA2, EPHA3, EPHB1 and EPHB2. Interacts with EPHA8; activates EPHA8. Forms a ternary EFNA5-EPHA3-ADAM10 complex mediating EFNA5 extracellular domain shedding by ADAM10 which regulates the EFNA5-EPHA3 complex internalization and function. Expressed in brain, heart, placenta and lung.

The protein resides in the cell membrane. Its subcellular location is the membrane. It is found in the caveola. In terms of biological role, cell surface GPI-bound ligand for Eph receptors, a family of receptor tyrosine kinases which are crucial for migration, repulsion and adhesion during neuronal, vascular and epithelial development. Binds promiscuously Eph receptors residing on adjacent cells, leading to contact-dependent bidirectional signaling into neighboring cells. The signaling pathway downstream of the receptor is referred to as forward signaling while the signaling pathway downstream of the ephrin ligand is referred to as reverse signaling. Induces compartmentalized signaling within a caveolae-like membrane microdomain when bound to the extracellular domain of its cognate receptor. This signaling event requires the activity of the Fyn tyrosine kinase. Activates the EPHA3 receptor to regulate cell-cell adhesion and cytoskeletal organization. With the receptor EPHA2 may regulate lens fiber cells shape and interactions and be important for lens transparency maintenance. May function actively to stimulate axon fasciculation. The interaction of EFNA5 with EPHA5 also mediates communication between pancreatic islet cells to regulate glucose-stimulated insulin secretion. Cognate/functional ligand for EPHA7, their interaction regulates brain development modulating cell-cell adhesion and repulsion. The chain is Ephrin-A5 (Efna5) from Rattus norvegicus (Rat).